We begin with the raw amino-acid sequence, 135 residues long: ATP synthase epsilon chain (135 aa).

The span at 90–103 shows a compositional bias: basic and acidic residues; it reads DVRRAESAKERAES. Residues 90 to 115 are disordered; sequence DVRRAESAKERAESHLNNNDEDTDIN.

It belongs to the ATPase epsilon chain family. In terms of assembly, F-type ATPases have 2 components, CF(1) - the catalytic core - and CF(0) - the membrane proton channel. CF(1) has five subunits: alpha(3), beta(3), gamma(1), delta(1), epsilon(1). CF(0) has three main subunits: a, b and c.

It localises to the cell membrane. Produces ATP from ADP in the presence of a proton gradient across the membrane. The polypeptide is ATP synthase epsilon chain (Staphylococcus carnosus (strain TM300)).